The sequence spans 185 residues: MKKNKLSIKTIVAIGIGSAVFMILGRFGSLPTGIPNTNIETAYAFLALMALLYGPLAGFLIGFIGHALKDIVFFGSPWISWVFASGIVGLIIGFGARFIKINQGVFKLKQIFMFNLIQIIANGVAWFLVAPTLDILIYSEPANKVYLQGVIGGISNMVTVGVLGTILIANYAKTRIQKGSLRKEY.

The next 5 membrane-spanning stretches (helical) occupy residues 11–31 (IVAI…GSLP), 44–64 (AFLA…IGFI), 71–91 (IVFF…VGLI), 111–131 (IFMF…LVAP), and 149–169 (GVIG…ILIA).

This sequence belongs to the UPF0397 family.

It localises to the cell membrane. The chain is UPF0397 protein CPF_1836 from Clostridium perfringens (strain ATCC 13124 / DSM 756 / JCM 1290 / NCIMB 6125 / NCTC 8237 / Type A).